Reading from the N-terminus, the 85-residue chain is Large ribosomal subunit protein bL27 (85 aa).

Positions 1–21 (MAHKKGVGSSKNGRESESKRL) are disordered.

It belongs to the bacterial ribosomal protein bL27 family.

This Porphyromonas gingivalis (strain ATCC 33277 / DSM 20709 / CIP 103683 / JCM 12257 / NCTC 11834 / 2561) protein is Large ribosomal subunit protein bL27.